The following is a 296-amino-acid chain: Glycine--tRNA ligase alpha subunit (296 aa).

This sequence belongs to the class-II aminoacyl-tRNA synthetase family. As to quaternary structure, tetramer of two alpha and two beta subunits.

It is found in the cytoplasm. The enzyme catalyses tRNA(Gly) + glycine + ATP = glycyl-tRNA(Gly) + AMP + diphosphate. The sequence is that of Glycine--tRNA ligase alpha subunit from Francisella tularensis subsp. holarctica (strain FTNF002-00 / FTA).